A 421-amino-acid polypeptide reads, in one-letter code: DNA (cytosine-5)-methyltransferase 3-like (421 aa).

Over residues 1–14 (MGSRETPSSCSKTL) the composition is skewed to polar residues. Residues 1–39 (MGSRETPSSCSKTLETLDLETSDSSSPDADSPLEEQWLK) form a disordered region. One can recognise an ADD domain in the interval 75-207 (EVKVNRRSIE…LKAFHDQEGA (133 aa)). A GATA-type; atypical zinc finger spans residues 86 to 116 (ICLCCGTLQVYTRHPLFEGGLCAPCKDKFLE). The segment at 127-183 (QSYCTICCSGGTLFICESPDCTRCYCFECVDILVGPGTSERINAMACWVCFLCLPFS) adopts a PHD-type; atypical zinc-finger fold.

In terms of assembly, homodimer. Heterotetramer composed of 1 DNMT3A homodimer and 2 DNMT3L subunits (DNMT3L-DNMT3A-DNMT3A-DNMT3L). Interacts with histone H3 (via N-terminus); interaction is strongly inhibited by methylation at lysine 4 (H3K4me). Interacts with EZH2; the interaction is direct. Interacts with SPOCD1. Expressed in testis, thymus, ovary, and heart.

It is found in the nucleus. Its function is as follows. Catalytically inactive regulatory factor of DNA methyltransferases that can either promote or inhibit DNA methylation depending on the context. Essential for the function of DNMT3A and DNMT3B: activates DNMT3A and DNMT3B by binding to their catalytic domain. Acts by accelerating the binding of DNA and S-adenosyl-L-methionine (AdoMet) to the methyltransferases and dissociates from the complex after DNA binding to the methyltransferases. Recognizes unmethylated histone H3 lysine 4 (H3K4me0) and induces de novo DNA methylation by recruitment or activation of DNMT3. Plays a key role in embryonic stem cells and germ cells. In germ cells, required for the methylation of imprinted loci together with DNMT3A. In male germ cells, specifically required to methylate retrotransposons, preventing their mobilization. Plays a key role in embryonic stem cells (ESCs) by acting both as an positive and negative regulator of DNA methylation. While it promotes DNA methylation of housekeeping genes together with DNMT3A and DNMT3B, it also acts as an inhibitor of DNA methylation at the promoter of bivalent genes. Interacts with the EZH2 component of the PRC2/EED-EZH2 complex, preventing interaction of DNMT3A and DNMT3B with the PRC2/EED-EZH2 complex, leading to maintain low methylation levels at the promoters of bivalent genes. Promotes differentiation of ESCs into primordial germ cells by inhibiting DNA methylation at the promoter of RHOX5, thereby activating its expression. This Mus musculus (Mouse) protein is DNA (cytosine-5)-methyltransferase 3-like (Dnmt3l).